The primary structure comprises 651 residues: Chaperone protein HtpG (651 aa).

An a; substrate-binding region spans residues 1 to 353 (MAPHVEQLEF…AQDMSLNVSR (353 aa)). The interval 354 to 569 (EILQQDRQIR…TFGITPALAR (216 aa)) is b. The segment at 570–651 (MYRASGQPVP…RLTRMVGEQS (82 aa)) is c.

It belongs to the heat shock protein 90 family. In terms of assembly, homodimer.

The protein localises to the cytoplasm. Molecular chaperone. Has ATPase activity. The polypeptide is Chaperone protein HtpG (Mycolicibacterium gilvum (strain PYR-GCK) (Mycobacterium gilvum (strain PYR-GCK))).